The chain runs to 360 residues: C-X-C chemokine receptor type 2 (360 aa).

Residues methionine 1–lysine 48 lie on the Extracellular side of the membrane. The N-linked (GlcNAc...) asparagine glycan is linked to asparagine 22. The chain crosses the membrane as a helical span at residues tyrosine 49–tyrosine 75. At serine 76–aspartate 84 the chain is on the cytoplasmic side. The helical transmembrane segment at valine 85 to alanine 105 threads the bilayer. Residues alanine 106–lysine 120 lie on the Extracellular side of the membrane. Cysteine 119 and cysteine 196 are joined by a disulfide. The helical transmembrane segment at valine 121 to valine 142 threads the bilayer. Topologically, residues aspartate 143 to lysine 163 are cytoplasmic. Residues phenylalanine 164–phenylalanine 183 traverse the membrane as a helical segment. Over arginine 184 to arginine 208 the chain is Extracellular. Residues methionine 209–tyrosine 231 form a helical membrane-spanning segment. Residues glycine 232–arginine 251 lie on the Cytoplasmic side of the membrane. A helical transmembrane segment spans residues valine 252 to alanine 273. The Extracellular portion of the chain corresponds to aspartate 274–arginine 294. The helical transmembrane segment at alanine 295 to alanine 315 threads the bilayer. Residues phenylalanine 316–leucine 360 are Cytoplasmic-facing. A phosphoserine mark is found at serine 347, serine 351, serine 352, and serine 353.

It belongs to the G-protein coupled receptor 1 family. As to quaternary structure, interacts with IL8. Interacts with GNAI2. In terms of processing, phosphorylated upon ligand binding; which is required for desensitization. Post-translationally, (Microbial infection) Proteolytically cleaved by Staphylococcus aureus staphopain A/SspP. This cleavage inhibits CXCR2-dependent neutrophil activation and chemotaxis.

Its subcellular location is the cell membrane. Its function is as follows. Receptor for interleukin-8 which is a powerful neutrophil chemotactic factor. Binding of IL-8 to the receptor causes activation of neutrophils. This response is mediated via a G-protein that activates a phosphatidylinositol-calcium second messenger system. Binds to IL-8 with high affinity. Also binds with high affinity to CXCL3, GRO/MGSA and NAP-2. The sequence is that of C-X-C chemokine receptor type 2 (CXCR2) from Homo sapiens (Human).